Reading from the N-terminus, the 89-residue chain is MSITAERKAEIIKANATKAGDTGSPEVQVAILSERINNLTGHFKTHGKDNHSRRGLLKLVSTRRSLLDYLKKNDEARYKALLEKHNIRR.

This sequence belongs to the universal ribosomal protein uS15 family. As to quaternary structure, part of the 30S ribosomal subunit. Forms a bridge to the 50S subunit in the 70S ribosome, contacting the 23S rRNA.

Its function is as follows. One of the primary rRNA binding proteins, it binds directly to 16S rRNA where it helps nucleate assembly of the platform of the 30S subunit by binding and bridging several RNA helices of the 16S rRNA. In terms of biological role, forms an intersubunit bridge (bridge B4) with the 23S rRNA of the 50S subunit in the ribosome. The sequence is that of Small ribosomal subunit protein uS15 from Bradyrhizobium sp. (strain ORS 278).